The following is a 347-amino-acid chain: Histone deacetylase 11 (347 aa).

Residues 14-318 form a histone deacetylase region; sequence TRWPIVYSPR…ARIIADSILN (305 aa). His143 is an active-site residue.

This sequence belongs to the histone deacetylase family. In terms of assembly, interacts with HDAC6.

The protein localises to the nucleus. The catalysed reaction is N(6)-acetyl-L-lysyl-[histone] + H2O = L-lysyl-[histone] + acetate. Its function is as follows. Responsible for the deacetylation of lysine residues on the N-terminal part of the core histones (H2A, H2B, H3 and H4). Histone deacetylation gives a tag for epigenetic repression and plays an important role in transcriptional regulation, cell cycle progression and developmental events. Histone deacetylases act via the formation of large multiprotein complexes. The chain is Histone deacetylase 11 (HDAC11) from Macaca fascicularis (Crab-eating macaque).